Reading from the N-terminus, the 617-residue chain is MANAPGPEIREKFQAALALSRVELHKNPEKEPYKSKYGARALLEEVRALLGPAPEDEDEPAADDGPGDQALGAGEPREAEGPGAQRALRLAVVEFHLGVNHIDTEELSAGEEHLVRCLSLLRPYRLSLGCVSLYIQAQNNLGILWSEREEIETARTYLESSEALYSQYMKEIGSPPLDPTEHFLPEEEKLTEQERSKRFEKVYTHNLYYLAQVYQHMEMFEKAAHYCHSTLKRQLEHNAYHPMEWAINAATLSQFYINKLCFMEARHCLSAANVIFGQTGKIPATEDTPEVEGDVPELYHQRKGEIARCWIKYCLTLMQNAQLSMQDNIGELDLDKQSELRALRKKELDEEESVRKRAVQFGTGELCDAISAVEEKVRYLRPLDFEEARELFLLGQHYVCEAKEFFQIDGYVTDHIEVVQDHSALFKVLSFFEADMERRCKMHKRRIAMLEPLTVDLNPQYYLLVSRQIQFEIAHAYYDMMDLKVAIADKLRDPDSHIVKKINSLNKSALKYYQLFLDSLRDPNKVFPEHIGEDVLRPAMLAKFRVARLYGKIITADPKKELENLATSLEHYKFIVDYCETHPEAAQEIEVELELSKEMVSLLPTKMERFRAKMALT.

Residues 48–83 are disordered; it reads ALLGPAPEDEDEPAADDGPGDQALGAGEPREAEGPG. Over residues 54–66 the composition is skewed to acidic residues; that stretch reads PEDEDEPAADDGP. Serine 174 bears the Phosphoserine mark.

The protein belongs to the KIF-binding protein family. Interacts with KIF1B; positively regulates KIF1B microtubule motor activity. Interacts with STMN2. In the embryo it is expressed in cortical neurons; expression increases during neuronal development.

The protein resides in the cytoplasm. It localises to the cytoskeleton. In terms of biological role, activator of KIF1B plus-end-directed microtubule motor activity. Required for organization of axonal microtubules, and axonal outgrowth and maintenance during peripheral and central nervous system development. This is KIF-binding protein from Mus musculus (Mouse).